We begin with the raw amino-acid sequence, 231 residues long: Ion-translocating oxidoreductase complex subunit E (231 aa).

Transmembrane regions (helical) follow at residues 18-38, 39-59, 69-89, 93-113, 127-147, 157-177, and 182-202; these read GLVQ…ITNA, LGLG…VSLV, IPVF…LINA, NLYL…VIIG, SAFD…VLGA, LFGG…IHVW, and PFLL…LIAL.

This sequence belongs to the NqrDE/RnfAE family. In terms of assembly, the complex is composed of six subunits: RnfA, RnfB, RnfC, RnfD, RnfE and RnfG.

The protein resides in the cell inner membrane. Part of a membrane-bound complex that couples electron transfer with translocation of ions across the membrane. The chain is Ion-translocating oxidoreductase complex subunit E from Shewanella frigidimarina (strain NCIMB 400).